Consider the following 755-residue polypeptide: Dolichyl-phosphate-mannose--protein mannosyltransferase 4 (755 aa).

Positions 1–23 (MSQTLKKRGGNSSGRKSPTTSNI) are disordered. Asn-11 carries an N-linked (GlcNAc...) asparagine glycan. A compositionally biased stretch (polar residues) spans 13-23 (SGRKSPTTSNI). The next 6 helical transmembrane spans lie at 92-112 (FFDL…WLIG), 147-167 (IVPI…ACLF), 185-205 (ILLD…YSKF), 212-232 (SFSS…SCVI), 237-257 (VGVF…WILL), and 278-298 (ALII…FAIL). 3 consecutive MIR domains span residues 325–389 (SKPV…IVPT), 396–454 (GTKV…LRLH), and 466–523 (KKEI…FDLI). Residue Asn-445 is glycosylated (N-linked (GlcNAc...) asparagine). 3 helical membrane-spanning segments follow: residues 595–615 (IFFI…SIYI), 640–660 (LYNT…PFFL), and 670–690 (YLPA…FICS). Asn-691 carries N-linked (GlcNAc...) asparagine glycosylation. The helical transmembrane segment at 706-726 (YKIIAVVAACSTAIIWFFFYF) threads the bilayer.

Belongs to the glycosyltransferase 39 family. In terms of assembly, forms a functional homodimer.

The protein localises to the endoplasmic reticulum membrane. The enzyme catalyses a di-trans,poly-cis-dolichyl beta-D-mannosyl phosphate + L-seryl-[protein] = 3-O-(alpha-D-mannosyl)-L-seryl-[protein] + a di-trans,poly-cis-dolichyl phosphate + H(+). It catalyses the reaction a di-trans,poly-cis-dolichyl beta-D-mannosyl phosphate + L-threonyl-[protein] = 3-O-(alpha-D-mannosyl)-L-threonyl-[protein] + a di-trans,poly-cis-dolichyl phosphate + H(+). Its pathway is protein modification; protein glycosylation. Functionally, protein mannosyltransferase (PMT) involved in hyphal growth and drug sensitivity. Transfers mannose from Dol-P-mannose to Ser or Thr residues on proteins. PMT1, PMT2 and PMT4 account for most of the protein-O-glycosylation activity, while PMT5 and PMT6 may specifically modulate a much narrower spectrum of target proteins. Accounts for the O-glycosylation of AXL2, responsible for bud site selection, as well as of the SEC20 t-SNARE component. O-glycosylation of SEC20 is essential for its stability. Required for biofilm formation. The protein is Dolichyl-phosphate-mannose--protein mannosyltransferase 4 of Candida albicans (strain SC5314 / ATCC MYA-2876) (Yeast).